The primary structure comprises 105 residues: Replication initiation control protein YabA (105 aa).

Positions 79, 81, 95, and 98 each coordinate Zn(2+).

This sequence belongs to the YabA family. Homotetramer. Interacts with both DnaA and DnaN, acting as a bridge between these two proteins. It depends on Zn(2+) as a cofactor.

It localises to the cytoplasm. The protein localises to the nucleoid. Its function is as follows. Involved in control of chromosome replication initiation. Inhibits the cooperative binding of DnaA to the oriC region, thus negatively regulating initiation of chromosome replication. Inhibits the ability of DnaA-ATP to form a helix on DNA; does not disassemble preformed DnaA-DNA helices. Decreases the residence time of DnaA on the chromosome at its binding sites (oriC, replication forks and promoter-binding sites). Tethers DnaA to the replication machinery via the DNA polymerase beta sliding clamp subunit (dnaN). Associates with oriC and other DnaA targets on the chromosome in a DnaA-dependent manner. This chain is Replication initiation control protein YabA, found in Streptococcus pneumoniae serotype 2 (strain D39 / NCTC 7466).